Consider the following 160-residue polypeptide: Small ribosomal subunit protein bS6 (160 aa).

The tract at residues 96–160 (RKVKRFIPRA…PRTRKVSKEQ (65 aa)) is disordered. Over residues 126–145 (TTDASKTEASTEATASKQSE) the composition is skewed to low complexity. A compositionally biased stretch (basic residues) spans 151 to 160 (PRTRKVSKEQ).

The protein belongs to the bacterial ribosomal protein bS6 family.

Binds together with bS18 to 16S ribosomal RNA. This chain is Small ribosomal subunit protein bS6, found in Metamycoplasma arthritidis (strain 158L3-1) (Mycoplasma arthritidis).